The chain runs to 428 residues: Enolase 3 (428 aa).

Gln163 is a (2R)-2-phosphoglycerate binding site. Glu205 acts as the Proton donor in catalysis. 3 residues coordinate Mg(2+): Asp242, Glu286, and Asp313. Lys338, Arg367, Ser368, and Lys389 together coordinate (2R)-2-phosphoglycerate. The Proton acceptor role is filled by Lys338.

Belongs to the enolase family. Requires Mg(2+) as cofactor.

Its subcellular location is the cytoplasm. The protein localises to the secreted. It localises to the cell surface. It catalyses the reaction (2R)-2-phosphoglycerate = phosphoenolpyruvate + H2O. The protein operates within carbohydrate degradation; glycolysis; pyruvate from D-glyceraldehyde 3-phosphate: step 4/5. Its function is as follows. Catalyzes the reversible conversion of 2-phosphoglycerate (2-PG) into phosphoenolpyruvate (PEP). It is essential for the degradation of carbohydrates via glycolysis. The sequence is that of Enolase 3 from Lactobacillus johnsonii (strain CNCM I-12250 / La1 / NCC 533).